The sequence spans 104 residues: Nucleoid-associated protein EF_2780 (104 aa).

It belongs to the YbaB/EbfC family. Homodimer.

The protein resides in the cytoplasm. It localises to the nucleoid. Its function is as follows. Binds to DNA and alters its conformation. May be involved in regulation of gene expression, nucleoid organization and DNA protection. This is Nucleoid-associated protein EF_2780 from Enterococcus faecalis (strain ATCC 700802 / V583).